Reading from the N-terminus, the 129-residue chain is Cytochrome b5 (129 aa).

One can recognise a Cytochrome b5 heme-binding domain in the interval 8 to 84; the sequence is TTIYTHEEVA…LEKLYIGNLK (77 aa). His43 and His67 together coordinate heme. A helical transmembrane segment spans residues 104-124; sequence GINFPLIAVGVFLAAFGVYYY.

Belongs to the cytochrome b5 family.

It is found in the endoplasmic reticulum membrane. Its subcellular location is the microsome membrane. In terms of biological role, membrane bound hemoprotein which function as an electron carrier for several membrane bound oxygenases. This Candida tropicalis (Yeast) protein is Cytochrome b5 (Cytb5).